The sequence spans 955 residues: 2-oxoglutarate dehydrogenase E1 component (955 aa).

It belongs to the alpha-ketoglutarate dehydrogenase family. As to quaternary structure, homodimer. Part of the 2-oxoglutarate dehydrogenase (OGDH) complex composed of E1 (2-oxoglutarate dehydrogenase), E2 (dihydrolipoamide succinyltransferase) and E3 (dihydrolipoamide dehydrogenase); the complex contains multiple copies of the three enzymatic components (E1, E2 and E3). Thiamine diphosphate is required as a cofactor.

It catalyses the reaction N(6)-[(R)-lipoyl]-L-lysyl-[protein] + 2-oxoglutarate + H(+) = N(6)-[(R)-S(8)-succinyldihydrolipoyl]-L-lysyl-[protein] + CO2. Its function is as follows. E1 component of the 2-oxoglutarate dehydrogenase (OGDH) complex which catalyzes the decarboxylation of 2-oxoglutarate, the first step in the conversion of 2-oxoglutarate to succinyl-CoA and CO(2). This Bacillus cereus (strain 03BB102) protein is 2-oxoglutarate dehydrogenase E1 component.